Reading from the N-terminus, the 123-residue chain is Methanesulfonate monooxygenase ferredoxin subunit (123 aa).

The Rieske domain occupies 4-99 (TYLCDAADVA…LKEEDGKLLA (96 aa)). [2Fe-2S] cluster contacts are provided by C43, H45, C63, and H66.

It belongs to the bacterial ring-hydroxylating dioxygenase ferredoxin component family. The MSA monooxygenase system consists of 4 proteins: the 2 subunits of the hydroxylase component (MsmA and MsmB), a ferredoxin (MsmC) and a ferredoxin reductase (MsmD). The ferredoxin component is dimeric. The cofactor is [2Fe-2S] cluster.

It is found in the cytoplasm. The catalysed reaction is methanesulfonate + NADH + O2 = sulfite + formaldehyde + NAD(+) + H2O. With respect to regulation, MSAMO is inhibited by metal chelators (such as bathophenanthroline, bathocuprione, neocuprione, alpha-alpha-dipyridil and sodium EDTA) and by sodium azide, sodium arsenate and potassium cyanide. Its function is as follows. Methanesulfonate monooxygenase (MSAMO) mediates the primary degradation of methanesulfonic acid (MSA) to produce formaldehyd and inorganic sulfite by initial hydroxylation of the carbon atom prior to spontaneous cleavage of the unstable hydroxymethanesulfonic acid. MSAMO has a restricted substrate range that includes only the short-chain aliphatic sulfonates (methane- to butanesulfonate) and excludes all larger molecules, such as arylsulfonates and aromatic sulfonates. All MSAMO components are required for enzyme activity. The chain is Methanesulfonate monooxygenase ferredoxin subunit from Methylosulfonomonas methylovora.